Consider the following 297-residue polypeptide: NAD(P)-dependent methylenetetrahydromethanopterin dehydrogenase (297 aa).

The protein to M.extorquens MtdA. As to quaternary structure, homohexamer.

It is found in the cytoplasm. The enzyme catalyses 5,10-methylenetetrahydromethanopterin + NAD(+) = 5,10-methenyl-5,6,7,8-tetrahydromethanopterin + NADH. It catalyses the reaction 5,10-methylenetetrahydromethanopterin + NADP(+) = 5,10-methenyl-5,6,7,8-tetrahydromethanopterin + NADPH. It functions in the pathway one-carbon metabolism; formaldehyde degradation; formate from formaldehyde (H(4)MPT route): step 2/5. In terms of biological role, catalyzes the dehydrogenation of methylene-H(4)MPT. The sequence is that of NAD(P)-dependent methylenetetrahydromethanopterin dehydrogenase (mtdB) from Methylorubrum extorquens (strain ATCC 14718 / DSM 1338 / JCM 2805 / NCIMB 9133 / AM1) (Methylobacterium extorquens).